The chain runs to 148 residues: Lysozyme C (148 aa).

Positions 1–18 (MKVLILLGLVLLSVMVQG) are cleaved as a signal peptide. One can recognise a C-type lysozyme domain in the interval 19-148 (KVFERCELAR…VSQYIQGCGV (130 aa)). 4 disulfides stabilise this stretch: Cys-24-Cys-146, Cys-48-Cys-134, Cys-83-Cys-99, and Cys-95-Cys-113. Residues Glu-53 and Asp-71 contribute to the active site.

This sequence belongs to the glycosyl hydrolase 22 family. As to quaternary structure, monomer.

The protein resides in the secreted. It carries out the reaction Hydrolysis of (1-&gt;4)-beta-linkages between N-acetylmuramic acid and N-acetyl-D-glucosamine residues in a peptidoglycan and between N-acetyl-D-glucosamine residues in chitodextrins.. Lysozymes have primarily a bacteriolytic function; those in tissues and body fluids are associated with the monocyte-macrophage system and enhance the activity of immunoagents. The chain is Lysozyme C (LYZ) from Saguinus oedipus (Cotton-top tamarin).